The chain runs to 521 residues: GMP synthase [glutamine-hydrolyzing] (521 aa).

Residues 5–197 enclose the Glutamine amidotransferase type-1 domain; it reads KILILDFGSQ…VLDICGAQPG (193 aa). Cys81 functions as the Nucleophile in the catalytic mechanism. Residues His171 and Glu173 contribute to the active site. Positions 198–390 constitute a GMPS ATP-PPase domain; that stretch reads WTMPNYIEEA…LGLPREMVYR (193 aa). 225 to 231 lines the ATP pocket; sequence SGGVDSS.

In terms of assembly, homodimer.

The enzyme catalyses XMP + L-glutamine + ATP + H2O = GMP + L-glutamate + AMP + diphosphate + 2 H(+). Its pathway is purine metabolism; GMP biosynthesis; GMP from XMP (L-Gln route): step 1/1. Its function is as follows. Catalyzes the synthesis of GMP from XMP. The sequence is that of GMP synthase [glutamine-hydrolyzing] from Neisseria gonorrhoeae (strain NCCP11945).